Reading from the N-terminus, the 278-residue chain is Ras-related protein Rab-40B (278 aa).

Residues S23, G26, and K27 each coordinate GTP. A switch-I region spans residues 41–49 (SPYGHPAGI). D69 lines the Mg(2+) pocket. GTP contacts are provided by G72, N126, and R127. Residues 72-88 (GQGRFCTIFRSYSRGAQ) form a switch-II region. The region spanning 175–228 (LLRHGMDRLWRPSKVLSLQDLCCRAVVSCTPVHLVDKLPLPIALRSHLKSFSMA) is the SOCS box domain. Residues 242-278 (SLTTSSTHKRSSLRKVKLVRPPQSPPKNCTRNSCKIS) form a disordered region. Positions 248–259 (THKRSSLRKVKL) are enriched in basic residues. Polar residues predominate over residues 267–278 (PKNCTRNSCKIS). C270 carries the S-palmitoyl cysteine lipid modification. C275 is lipidated: S-geranylgeranyl cysteine.

The protein belongs to the small GTPase superfamily. Rab family. As to quaternary structure, component of the cullin-5-RING E3 ubiquitin-protein ligase complex (ECS(RAB40B) complex) composed of CUL5, Elongin BC (ELOB and ELOC), RNF7/RBX2 and RAB40B; RAB40B interaction with ECS complex is GTP-independent. Binds (GTP-bound) LIMA1; interaction promotes LIMA1 subcellular localization in lamellipodia during cell migration. Interacts (GTP-bound) with TKS5/SH3PXD2A (via PX domain); interaction promotes invadopodia-mediated extracellular matrix degradation. The cofactor is Mg(2+).

The protein localises to the cell membrane. It localises to the cytoplasm. It is found in the cytosol. The protein resides in the cell projection. Its subcellular location is the lamellipodium membrane. The protein localises to the ruffle. The enzyme catalyses GTP + H2O = GDP + phosphate + H(+). Its pathway is protein modification; protein ubiquitination. Regulated by guanine nucleotide exchange factors (GEFs) which promote the exchange of bound GDP for free GTP. Regulated by GTPase activating proteins (GAPs) which increase the GTP hydrolysis activity. Inhibited by GDP dissociation inhibitors (GDIs). Functionally, RAB40B small GTPase acts as substrate-recognition components of the ECS(RAB40B) E3 ubiquitin ligase complex which mediates the ubiquitination of target proteins. The Rab40 subfamily belongs to the Rab family that are key regulators of intracellular membrane trafficking, from the formation of transport vesicles to their fusion with membranes. Rabs cycle between an inactive GDP-bound form and an active GTP-bound form that is able to recruit to membranes different sets of downstream effectors directly responsible for vesicle formation, movement, tethering and fusion. As part of the ECS(RAB40B) complex, GTP-bound RAB40B promotes LIMA1/EPLIN ubiquitination and degradation, thereby regulating leading-edge actin dynamics during cell migration. As part of the ECS(RAB40B) complex, GTP-bound RAB40B also ubiquitinates RAP2A GTPase which promotes its localization to lamellipodia and activation to drive cell migration. The ECS(RAB40B) complex does not mediate canonical ubiquitin-dependent degradation of RAP2. RAB40B also binds TKS5/SH3PXD2A effector independently from ECS complex to promote invadopodia-mediated extracellular matrix degradation. This chain is Ras-related protein Rab-40B, found in Homo sapiens (Human).